The following is a 149-amino-acid chain: MADQLTDDQISEFKEAFSLFDKDGDGCITTKELGTVMRSLGQNPTEAELQDMINEVDADGNGTIDFPEFLNLMARKMKDTDSEEELKEAFRVFDKDQNGFISAAELRHVMTNLGEKLSDEEVDEMIREADVDGDGQINYEEFVKVMMAK.

EF-hand domains lie at 8 to 43 (DQISEFKEAFSLFDKDGDGCITTKELGTVMRSLGQN), 44 to 79 (PTEAELQDMINEVDADGNGTIDFPEFLNLMARKMKD), 81 to 116 (DSEEELKEAFRVFDKDQNGFISAAELRHVMTNLGEK), and 117 to 149 (LSDEEVDEMIREADVDGDGQINYEEFVKVMMAK). Residues Asp21, Asp23, Asp25, Cys27, Glu32, Asp57, Asp59, Asn61, Thr63, Glu68, Asp94, Asp96, Asn98, Glu105, Asp130, Asp132, Asp134, Gln136, and Glu141 each coordinate Ca(2+).

This sequence belongs to the calmodulin family. In terms of assembly, interacts with KCBP.

Its function is as follows. Calmodulin mediates the control of a large number of enzymes, ion channels and other proteins by Ca(2+). Among the enzymes to be stimulated by the calmodulin-Ca(2+) complex are a number of protein kinases and phosphatases. The chain is Calmodulin-6 (CAM6) from Arabidopsis thaliana (Mouse-ear cress).